A 164-amino-acid polypeptide reads, in one-letter code: NADH-quinone oxidoreductase subunit I 1 (164 aa).

4Fe-4S ferredoxin-type domains follow at residues 54–84 (LRRY…IEAG) and 95–124 (VRYD…EGPN). 8 residues coordinate [4Fe-4S] cluster: C64, C67, C70, C74, C104, C107, C110, and C114.

Belongs to the complex I 23 kDa subunit family. As to quaternary structure, NDH-1 is composed of 14 different subunits. Subunits NuoA, H, J, K, L, M, N constitute the membrane sector of the complex. [4Fe-4S] cluster serves as cofactor.

The protein resides in the cell inner membrane. The enzyme catalyses a quinone + NADH + 5 H(+)(in) = a quinol + NAD(+) + 4 H(+)(out). NDH-1 shuttles electrons from NADH, via FMN and iron-sulfur (Fe-S) centers, to quinones in the respiratory chain. The immediate electron acceptor for the enzyme in this species is believed to be ubiquinone. Couples the redox reaction to proton translocation (for every two electrons transferred, four hydrogen ions are translocated across the cytoplasmic membrane), and thus conserves the redox energy in a proton gradient. The chain is NADH-quinone oxidoreductase subunit I 1 from Rhizobium meliloti (strain 1021) (Ensifer meliloti).